We begin with the raw amino-acid sequence, 435 residues long: Beta-arrestin arr-1 (435 aa).

Positions 358 to 382 (LTHSKPPESPERTDRGLPSIEATNG) are disordered. Basic and acidic residues predominate over residues 362–372 (KPPESPERTDR). The short motif at 390 to 394 (LIQLH) is the Clathrin box element. The [DE]-X(1,2)-F-X-X-[FL]-X-X-X-R motif signature appears at 404–414 (DLIFEDFARMR). The tract at residues 416–435 (HGNDSEDQPSPSANLPPSLL) is disordered. Residues 424–435 (PSPSANLPPSLL) are compositionally biased toward low complexity.

The protein belongs to the arrestin family. As to quaternary structure, component of a complex composed of arr-1, daf-18 and mpz-1. Within the complex, interacts (via C-terminus) with mpz-1 (via PDZ domain) and phosphatase daf-18. May interact (via C-terminus) with clathrin chc-1 and beta-2 adaptin (AP2) apb-1. As to expression, expressed in head neurons, nerve ring and ventral nerve cord (at protein level). Expressed in the nervous system including the nerve ring and the ventral and dorsal nerve cords. Highly expressed in amphid chemosensory neurons AWA, AWB, AWC, ADL and ASH, and in hermaphrodite specific neuron HSN. Also expressed in the intestine.

It localises to the perikaryon. It is found in the cell projection. The protein resides in the dendrite. In terms of biological role, adapter protein required for olfactory adaptation and recovery to volatile odorants, probably by desensitization of G-protein coupled receptors (GPCR). May play a role in clathrin-mediated GPCR endocytosis. Acts as a positive regulator of insulin-like daf-2 signaling pathway probably by forming a complex with mpz-1 and phosphatase daf-18 likely resulting in daf-18 inhibition. Involved in egg-laying. This Caenorhabditis elegans protein is Beta-arrestin arr-1.